Reading from the N-terminus, the 283-residue chain is Mau operon transcriptional activator (283 aa).

The HTH lysR-type domain maps to 1-58; that stretch reads MNWDDLRVVAAINRCGSFNRAAKMLNVEETTIARRLARLEGSLGCVLFQAVDGQRRPT. Positions 18-37 form a DNA-binding region, H-T-H motif; sequence FNRAAKMLNVEETTIARRLA.

This sequence belongs to the LysR transcriptional regulatory family.

Its function is as follows. Transcriptional activator of the mau genes involved in methylamine metabolism. The chain is Mau operon transcriptional activator (mauR) from Paracoccus denitrificans.